The chain runs to 593 residues: Epidermal growth factor receptor kinase substrate 8-like protein 3 (593 aa).

Residues 28 to 155 (QHRVEHLMTC…ALEEELEQRP (128 aa)) form the PTB domain. Disordered stretches follow at residues 149 to 171 (EELE…RGPA), 184 to 239 (LEPG…ERDE), and 374 to 451 (ADWT…PAQP). S231 carries the post-translational modification Phosphoserine. Residues 386–401 (PTFSDDWQLPEPSSQA) show a composition bias toward polar residues. A compositionally biased stretch (basic and acidic residues) spans 425–435 (PQEKTHNHDPQ). Positions 450 to 509 (QPALKMQVLYEFEARNPRELTVVQGEKLEVLDHSKRWWLVKNEAGRSGYIPSNILEPLQP) constitute an SH3 domain.

It belongs to the EPS8 family. In terms of assembly, interacts with ABI1. Part of a complex that contains SOS1, ABI1 and EPS8L2. Interacts with FASLG.

It is found in the cytoplasm. The protein is Epidermal growth factor receptor kinase substrate 8-like protein 3 (EPS8L3) of Homo sapiens (Human).